Reading from the N-terminus, the 205-residue chain is Guanylate kinase (205 aa).

The Guanylate kinase-like domain occupies 3 to 181 (GSLYIISAPS…ALSELHSIFL (179 aa)). An ATP-binding site is contributed by 10 to 17 (APSGAGKT).

It belongs to the guanylate kinase family.

It localises to the cytoplasm. It carries out the reaction GMP + ATP = GDP + ADP. Essential for recycling GMP and indirectly, cGMP. The chain is Guanylate kinase from Hydrogenovibrio crunogenus (strain DSM 25203 / XCL-2) (Thiomicrospira crunogena).